A 310-amino-acid chain; its full sequence is Probable GTP 3',8-cyclase (310 aa).

Residues 5-218 enclose the Radical SAM core domain; it reads KYGRSLQKLR…VNIIFELGGR (214 aa). Arginine 14 is a GTP binding site. [4Fe-4S] cluster is bound by residues cysteine 21, cysteine 25, and cysteine 28. Lysine 62 is a GTP binding site. Position 66 (glycine 66) interacts with S-adenosyl-L-methionine. Threonine 91 is a binding site for GTP. Serine 115 serves as a coordination point for S-adenosyl-L-methionine. A GTP-binding site is contributed by lysine 153. Residues cysteine 251, cysteine 254, and cysteine 268 each coordinate [4Fe-4S] cluster.

It belongs to the radical SAM superfamily. MoaA family. [4Fe-4S] cluster serves as cofactor.

It catalyses the reaction GTP + AH2 + S-adenosyl-L-methionine = (8S)-3',8-cyclo-7,8-dihydroguanosine 5'-triphosphate + 5'-deoxyadenosine + L-methionine + A + H(+). The protein operates within cofactor biosynthesis; molybdopterin biosynthesis. Catalyzes the cyclization of GTP to (8S)-3',8-cyclo-7,8-dihydroguanosine 5'-triphosphate. The sequence is that of Probable GTP 3',8-cyclase from Pyrobaculum aerophilum (strain ATCC 51768 / DSM 7523 / JCM 9630 / CIP 104966 / NBRC 100827 / IM2).